A 407-amino-acid polypeptide reads, in one-letter code: Dephospho-CoA kinase (407 aa).

In terms of domain architecture, DPCK spans 3-201 (RIGLTGGIGA…ERIVPFAHNL (199 aa)). 11 to 16 (GAGKSA) lines the ATP pocket. The tract at residues 196-407 (PFAHNLSTRQ…DWADSTGWKP (212 aa)) is UPF0157.

The protein in the N-terminal section; belongs to the CoaE family. In the C-terminal section; belongs to the UPF0157 (GrpB) family.

The protein localises to the cytoplasm. The catalysed reaction is 3'-dephospho-CoA + ATP = ADP + CoA + H(+). The protein operates within cofactor biosynthesis; coenzyme A biosynthesis; CoA from (R)-pantothenate: step 5/5. In terms of biological role, catalyzes the phosphorylation of the 3'-hydroxyl group of dephosphocoenzyme A to form coenzyme A. The protein is Dephospho-CoA kinase of Mycolicibacterium paratuberculosis (strain ATCC BAA-968 / K-10) (Mycobacterium paratuberculosis).